A 32-amino-acid chain; its full sequence is uncharacterized protein (32 aa).

This is an uncharacterized protein from Haemophilus influenzae (strain ATCC 51907 / DSM 11121 / KW20 / Rd).